The sequence spans 209 residues: MKSDLRYFFLFCIQVEILAGEFNDSAASEMFIFHNGGVQILCKYPDTVRQFKMQLLKGDNVLCDLTKTKENEDTVSIRNLNVCKFQLSNNSVSFFLYNLDSSYASYYICKLSIFDPPPFQVDILSREYLNIYESELCCQLKFWLPIGCAAFVTVCVFGCVLMYWLTKKKYPTSVHDPNSEYMFMAAVNTAKKPAPTDVTRNLELPGTQA.

Residues 1-19 form the signal peptide; that stretch reads MKSDLRYFFLFCIQVEILA. Residues 20-141 are Extracellular-facing; that stretch reads GEFNDSAASE…YESELCCQLK (122 aa). Asn-23 is a glycosylation site (N-linked (GlcNAc...) asparagine). Residues 30–133 form the Ig-like V-type domain; sequence MFIFHNGGVQ…LSREYLNIYE (104 aa). 2 disulfides stabilise this stretch: Cys-42-Cys-109 and Cys-63-Cys-83. An N-linked (GlcNAc...) asparagine glycan is attached at Asn-89. Residues 142–162 traverse the membrane as a helical segment; that stretch reads FWLPIGCAAFVTVCVFGCVLM.

In terms of assembly, homodimer; disulfide-linked. Interacts with ICOSLG. Interacts with PIK3R1. Interacts with TBK1; this interaction is critical for the maturation of T follicular regulatory cells. N-glycosylated.

The protein localises to the cell membrane. Functionally, stimulatory receptor expressed in activated or antigen-experienced T-cells that plays an important role in the immune response. Upon binding to its ligand ICOSL expressed on antigen presenting cells (APCs), delivers costimulatory signals that enhances all basic T-cell responses to a foreign antigen, namely proliferation, secretion of lymphokines including IL10, up-regulation of molecules that mediate cell-cell interaction, and effective help for antibody secretion by B-cells. Also acts as a costimulatory receptor critical for the differentiation of T follicular regulatory cells upon immune challenges such as viral infection. Mechanistically, potentiates TCR-induced calcium flux by augmenting PLCG1 activation and actin remodeling. In addition, activates PI3K signaling pathways independently of calcium flux. Essential both for efficient interaction between T and B-cells and for normal antibody responses to T-cell dependent antigens. Prevents the apoptosis of pre-activated T-cells. Plays a critical role in CD40-mediated class switching of immunoglobin isotypes. The polypeptide is Inducible T-cell costimulator (ICOS) (Bos taurus (Bovine)).